A 1373-amino-acid chain; its full sequence is DNA-directed RNA polymerase subunit beta (1373 aa).

Belongs to the RNA polymerase beta chain family. In terms of assembly, the RNAP catalytic core consists of 2 alpha, 1 beta, 1 beta' and 1 omega subunit. When a sigma factor is associated with the core the holoenzyme is formed, which can initiate transcription.

It carries out the reaction RNA(n) + a ribonucleoside 5'-triphosphate = RNA(n+1) + diphosphate. In terms of biological role, DNA-dependent RNA polymerase catalyzes the transcription of DNA into RNA using the four ribonucleoside triphosphates as substrates. This Rickettsia akari (strain Hartford) protein is DNA-directed RNA polymerase subunit beta.